A 286-amino-acid chain; its full sequence is S-adenosylmethionine-dependent methyltransferase UmaA (286 aa).

S-adenosyl-L-methionine is bound by residues 32–33 (YT), 67–75 (LLDIGCGWG), 93–98 (TLSRNQ), and 122–123 (WD). The active site involves Cys268.

This sequence belongs to the CFA/CMAS family.

It is found in the cytoplasm. Functionally, methyltransferase that modifies short-chain fatty acids. In vitro, catalyzes the transfer of the methyl group from S-adenosyl-L-methionine (SAM) to the double bond of phospholipid-linked oleic acid to produce tuberculostearic acid (10-methylstearic-acid or TSA). The sequence is that of S-adenosylmethionine-dependent methyltransferase UmaA from Mycobacterium tuberculosis (strain ATCC 25618 / H37Rv).